The following is a 318-amino-acid chain: Methenyltetrahydromethanopterin cyclohydrolase (318 aa).

The protein belongs to the MCH family.

The protein localises to the cytoplasm. The enzyme catalyses 5,10-methenyl-5,6,7,8-tetrahydromethanopterin + H2O = N(5)-formyl-5,6,7,8-tetrahydromethanopterin + H(+). Its pathway is one-carbon metabolism; methanogenesis from CO(2); 5,10-methenyl-5,6,7,8-tetrahydromethanopterin from CO(2): step 3/3. Functionally, catalyzes the reversible interconversion of 5-formyl-H(4)MPT to methenyl-H(4)MPT(+). The protein is Methenyltetrahydromethanopterin cyclohydrolase of Methanocella arvoryzae (strain DSM 22066 / NBRC 105507 / MRE50).